Reading from the N-terminus, the 662-residue chain is Leucine aminopeptidase 2 (662 aa).

A peptide contacts are provided by residues Gln178–Glu180 and Pro304–Glu309. Zn(2+) is bound at residue His333. Glu334 serves as the catalytic Proton acceptor. Residues His337 and Glu356 each coordinate Zn(2+). The Proton donor role is filled by Tyr422.

The protein belongs to the peptidase M1 family. Requires Zn(2+) as cofactor.

The protein localises to the cytoplasm. It is found in the nucleus. It catalyses the reaction an epoxide + H2O = an ethanediol. Functionally, aminopeptidase that preferentially cleaves di- and tripeptides. Also has low epoxide hydrolase activity (in vitro). Can hydrolyze the epoxide leukotriene LTA(4) but it forms preferentially 5,6-dihydroxy-7,9,11,14-eicosatetraenoic acid rather than the cytokine leukotriene B(4) as the product compared to the homologous mammalian enzyme (in vitro). The chain is Leucine aminopeptidase 2 from Kluyveromyces lactis (strain ATCC 8585 / CBS 2359 / DSM 70799 / NBRC 1267 / NRRL Y-1140 / WM37) (Yeast).